Here is a 204-residue protein sequence, read N- to C-terminus: Large ribosomal subunit protein uL4 (204 aa).

A disordered region spans residues 49–75 (TKGRSDVSGGGKKPWRQKGRGGARAGS).

The protein belongs to the universal ribosomal protein uL4 family. Part of the 50S ribosomal subunit.

Its function is as follows. One of the primary rRNA binding proteins, this protein initially binds near the 5'-end of the 23S rRNA. It is important during the early stages of 50S assembly. It makes multiple contacts with different domains of the 23S rRNA in the assembled 50S subunit and ribosome. In terms of biological role, forms part of the polypeptide exit tunnel. The protein is Large ribosomal subunit protein uL4 of Campylobacter jejuni subsp. jejuni serotype O:23/36 (strain 81-176).